Consider the following 271-residue polypeptide: Glutamate racemase (271 aa).

Substrate is bound by residues 12–13 (DS) and 44–45 (YG). The active-site Proton donor/acceptor is the cysteine 75. 76-77 (NS) lines the substrate pocket. The active-site Proton donor/acceptor is cysteine 185. Residue 186–187 (TH) coordinates substrate.

It belongs to the aspartate/glutamate racemases family.

It carries out the reaction L-glutamate = D-glutamate. The protein operates within cell wall biogenesis; peptidoglycan biosynthesis. In terms of biological role, provides the (R)-glutamate required for cell wall biosynthesis. The polypeptide is Glutamate racemase (Mycobacterium bovis (strain ATCC BAA-935 / AF2122/97)).